Here is a 203-residue protein sequence, read N- to C-terminus: Ribonuclease HII (203 aa).

An RNase H type-2 domain is found at 14-203; it reads GVIAGVDEVG…ILNSTKRALL (190 aa). The a divalent metal cation site is built by D20, E21, and D112.

This sequence belongs to the RNase HII family. Mn(2+) serves as cofactor. Mg(2+) is required as a cofactor.

Its subcellular location is the cytoplasm. It carries out the reaction Endonucleolytic cleavage to 5'-phosphomonoester.. Endonuclease that specifically degrades the RNA of RNA-DNA hybrids. The chain is Ribonuclease HII from Wolbachia sp. subsp. Brugia malayi (strain TRS).